A 151-amino-acid chain; its full sequence is Ribosome maturation factor RimP (151 aa).

It belongs to the RimP family.

The protein resides in the cytoplasm. In terms of biological role, required for maturation of 30S ribosomal subunits. This Synechocystis sp. (strain ATCC 27184 / PCC 6803 / Kazusa) protein is Ribosome maturation factor RimP.